The following is a 74-amino-acid chain: Cytochrome c oxidase assembly factor 5 (74 aa).

One can recognise a CHCH domain in the interval 27 to 65 (QSDCVVQEGKSPRQCLKEGYCNSLKYAFFECKRSVLDNR). A Cx10C motif motif is present at residues 30–41 (CVVQEGKSPRQC). Cystine bridges form between Cys30-Cys57 and Cys41-Cys47. Phosphoserine is present on Ser37. The Cx9C motif motif lies at 47 to 57 (CNSLKYAFFEC).

The protein belongs to the PET191 family.

Involved in an early step of the mitochondrial complex IV assembly process. The protein is Cytochrome c oxidase assembly factor 5 (COA5) of Homo sapiens (Human).